The sequence spans 101 residues: Apolipoprotein C-II (101 aa).

Positions 1 to 22 (MGARHLLALLLVLLVLGFEVQG) are cleaved as a signal peptide. The segment at 66-74 (TMDEKIRDM) is lipid binding. The lipoprotein lipase cofactor stretch occupies residues 78-101 (STAAVSTYVGIFTDQLLSLLKGED).

The protein belongs to the apolipoprotein C2 family. Post-translationally, proapolipoprotein C-II is synthesized as a sialic acid containing glycoprotein which is subsequently desialylated prior to its proteolytic processing. Proapolipoprotein C-II, the major form found in plasma undergoes proteolytic cleavage of its N-terminal hexapeptide to generate apolipoprotein C-II, which occurs as the minor form in plasma.

It is found in the secreted. Component of chylomicrons, very low-density lipoproteins (VLDL), low-density lipoproteins (LDL), and high-density lipoproteins (HDL) in plasma. Plays an important role in lipoprotein metabolism as an activator of lipoprotein lipase. Both proapolipoprotein C-II and apolipoprotein C-II can activate lipoprotein lipase. This is Apolipoprotein C-II (APOC2) from Tapirus terrestris (Lowland tapir).